The chain runs to 354 residues: P2Y purinoceptor 13 (354 aa).

At 1 to 49 (MTAAIRRQRELSILPKVTLEAMNTTVMQGFNRSERCPRDTRIVQLVFPA) the chain is on the extracellular side. N-linked (GlcNAc...) asparagine glycans are attached at residues N23 and N31. The helical transmembrane segment at 50–70 (LYTVVFLTGILLNTLALWVFV) threads the bilayer. The Cytoplasmic segment spans residues 71–77 (HIPSSST). Residues 78–98 (FIIYLKNTLVADLIMTLMLPF) traverse the membrane as a helical segment. The Extracellular portion of the chain corresponds to 99 to 117 (KILSDSHLAPWQLRAFVCR). C116 and C194 are joined by a disulfide. Residues 118–138 (FSSVIFYETMYVGIVLLGLIA) form a helical membrane-spanning segment. The Cytoplasmic portion of the chain corresponds to 139 to 161 (FDRFLKIIRPLRNIFLKKPVFAK). The helical transmembrane segment at 162–182 (TVSIFIWFFLFFISLPNTILS) threads the bilayer. The Extracellular segment spans residues 183–211 (NKEATPSSVKKCASLKGPLGLKWHQMVNN). Residues 212–232 (ICQFIFWTVFILMLVFYVVIA) traverse the membrane as a helical segment. Residues 233 to 252 (KKVYDSYRKSKSKDRKNNKK) lie on the Cytoplasmic side of the membrane. A helical transmembrane segment spans residues 253 to 273 (LEGKVFVVVAVFFVCFAPFHF). At 274-300 (ARVPYTHSQTNNKTDCRLQNQLFIAKE) the chain is on the extracellular side. The N-linked (GlcNAc...) asparagine glycan is linked to N285. The chain crosses the membrane as a helical span at residues 301 to 321 (TTLFLAATNICMDPLIYIFLC). At 322–333 (KKFTEKLPCMQG) the chain is on the cytoplasmic side. The disordered stretch occupies residues 335 to 354 (KTTASSQENHSSQTDNITLG).

Belongs to the G-protein coupled receptor 1 family. Strong expression in spleen and adult brain. Lower expression in placenta, lung, liver, spinal cord, thymus, small intestine, uterus, stomach, testis, fetal brain, and adrenal gland. Not detected in pancreas, heart, kidney, skeletal muscle, ovary or fetal aorta. Clearly detected in lymph node and bone marrow, weakly detected in peripheral blood mononuclear cells (PBMC) and in peripheral blood leukocytes (PBL), but not detected in polymorphonuclear cells (PMN). In the brain, detected in all brain regions examined.

The protein localises to the cell membrane. In terms of biological role, receptor for ADP. Coupled to G(i)-proteins. May play a role in hematopoiesis and the immune system. This Homo sapiens (Human) protein is P2Y purinoceptor 13 (P2RY13).